The primary structure comprises 56 residues: Large ribosomal subunit protein bL33 (56 aa).

Belongs to the bacterial ribosomal protein bL33 family.

This Tropheryma whipplei (strain TW08/27) (Whipple's bacillus) protein is Large ribosomal subunit protein bL33.